A 90-amino-acid polypeptide reads, in one-letter code: Acylphosphatase (90 aa).

In terms of domain architecture, Acylphosphatase-like spans 5 to 90; it reads CERFIVKGHV…YKPFRGFKIL (86 aa). Catalysis depends on residues Arg-20 and Asn-38.

Belongs to the acylphosphatase family.

It catalyses the reaction an acyl phosphate + H2O = a carboxylate + phosphate + H(+). The polypeptide is Acylphosphatase (acyP) (Vibrio parahaemolyticus serotype O3:K6 (strain RIMD 2210633)).